The following is a 444-amino-acid chain: Methylenetetrahydrofolate--tRNA-(uracil-5-)-methyltransferase TrmFO (444 aa).

An FAD-binding site is contributed by 9-14 (GAGLAG).

This sequence belongs to the MnmG family. TrmFO subfamily. FAD is required as a cofactor.

It localises to the cytoplasm. It catalyses the reaction uridine(54) in tRNA + (6R)-5,10-methylene-5,6,7,8-tetrahydrofolate + NADH + H(+) = 5-methyluridine(54) in tRNA + (6S)-5,6,7,8-tetrahydrofolate + NAD(+). The catalysed reaction is uridine(54) in tRNA + (6R)-5,10-methylene-5,6,7,8-tetrahydrofolate + NADPH + H(+) = 5-methyluridine(54) in tRNA + (6S)-5,6,7,8-tetrahydrofolate + NADP(+). Catalyzes the folate-dependent formation of 5-methyl-uridine at position 54 (M-5-U54) in all tRNAs. The protein is Methylenetetrahydrofolate--tRNA-(uracil-5-)-methyltransferase TrmFO of Koribacter versatilis (strain Ellin345).